Reading from the N-terminus, the 437-residue chain is Triacylglycerol lipase (437 aa).

One can recognise a PE domain in the interval Met-1–Gln-100. Positions Ser-101–Ser-206 are linker. The tract at residues Leu-207–Ala-437 is lipase. The Involved in the stabilization of the negatively charged intermediate by the formation of the oxyanion hole motif lies at His-239–Gly-241. Catalysis depends on residues Ser-309, Asp-383, and His-413.

The protein in the N-terminal section; belongs to the mycobacterial PE family. PGRS subfamily. In the C-terminal section; belongs to the 'GDXG' lipolytic enzyme family. In terms of assembly, forms aggregates via its PE domain. Post-translationally, upon export, the PE domain is removed by proteolytic cleavage. Cleavage occurs at the cell surface and is not required for secretion. Cleaved after Gly-149 by the aspartic protease PecA. May also be cleaved before Leu-98 and after Ala-136.

The protein resides in the cytoplasm. It is found in the secreted. The protein localises to the cell wall. Its subcellular location is the cell surface. It carries out the reaction a triacylglycerol + H2O = a diacylglycerol + a fatty acid + H(+). The enzyme catalyses 1,2,3-tri-(9Z-octadecenoyl)-glycerol + H2O = di-(9Z)-octadecenoylglycerol + (9Z)-octadecenoate + H(+). The catalysed reaction is an acetyl ester + H2O = an aliphatic alcohol + acetate + H(+). It catalyses the reaction a butanoate ester + H2O = an aliphatic alcohol + butanoate + H(+). It carries out the reaction a hexanoate ester + H2O = an aliphatic alcohol + hexanoate + H(+). The enzyme catalyses an octanoate ester + H2O = an aliphatic alcohol + octanoate + H(+). The catalysed reaction is a dodecanoate ester + H2O = an aliphatic alcohol + dodecanoate + H(+). It catalyses the reaction a tetradecanoate ester + H2O = an aliphatic alcohol + tetradecanoate + H(+). It carries out the reaction hexadecanoate ester + H2O = an aliphatic alcohol + hexadecanoate + H(+). The enzyme catalyses octadecanoate ester + H2O = an aliphatic alcohol + octadecanoate + H(+). The catalysed reaction is 1-butyrylglycerol + H2O = butanoate + glycerol + H(+). It catalyses the reaction 1,2,3-tributanoylglycerol + H2O = dibutanoylglycerol + butanoate + H(+). Its activity is regulated as follows. PE domain down-regulates lipase activity. With respect to regulation, cleavage by PecA does not affect surface localization and lipase activity. Inhibited by diethyl-p-nitrophenyl phosphate (E-600) at 0.5 uM, by phenylmethanesulfonyl fluoride at 5 mM and by polyethylene glycol sorbitan monolaurate (Tween 20). Also inhibited by CaCl(2), CoCl(2), MnCl(2), ZnCl(2) and MgCl(2). Inhibited by several hydrazides compounds. Stimulated slightly by SDS at concentrations up to 2 mM, above which the activity is severely inhibited. Catalyzes the hydrolysis of both intracellular and extracellular triacylglycerol (TAG). In vitro, can also hydrolyze p-nitrophenyl (pNP) esters with various chain lengths, including pNP-acetate (C2), pNP-butyrate (C4), pNP-caproate (C6), pNP-caprylate (C8), pNP-laurate (C12), pNP-myristate (C14), pNP-palmitate (C16) and pNP-stearate (C18). Also hydrolyzes monobutyrin, tributyrin and trioctanoin. Overexpression results in increase of virulence characterized by reduced survival of infected mouse and increased burden of bacilli in the lungs. Hydrolyzes internal or host-derived TAG depending on its localization. Functionally, hydrolyzes TAG that accumulates within mycobacterial intracytosolic lipid inclusions (ILI). Probably responsible for the utilization of stored long-chain TAG during the dormancy and reactivation stages of the pathogen. In terms of biological role, hydrolyzes host-derived TAG. The polypeptide is Triacylglycerol lipase (Mycobacterium tuberculosis (strain ATCC 25618 / H37Rv)).